Reading from the N-terminus, the 493-residue chain is MASGILVNVKEEVTCPICLELLTQPLSLDCGHSFCQACLTANHKKSTLDKGERSCPVCRVSYQPKNIRPNRHVANIVEKLREVKLSPEGQKVDHCARHGEKLLLFCKEDGKVICWLCERSQEHRGHHTFLTEEVAQKYQVKLQAALEMLRQKQQEAEELEADIREEKASWKTQIQYDKTSVLADFEQLRDILDWEESNELQNLEKEEEDILKSLTKSETEMVQQTQSVRELISDVEHRLQGSVMELLQGVDGVIKRMQNVTLKKPETFPKNQRRVFRAPNLKGMLEVFRELTDVRRYWVDVTVAPNDISYAVISEDMRQVSCPEPQIIYGAQGTTYQTYVNFNYCTGILGSQSITSGKHYWEVDVSKKSAWILGVCAGFQPDAMYNIEQNENYQPQYGYWVIGLEEGVKCSAFQDGSFHNPSAPFIVPLSVIICPDRVGVFLDYEACTVSFFNITNHGFLIYKFSHCSFSQPVFPYLNPRKCRVPMTLCSPSS.

Ala2 carries the post-translational modification N-acetylalanine. The segment at 15–59 (CPICLELLTQPLSLDCGHSFCQACLTANHKKSTLDKGERSCPVCR) adopts an RING-type zinc-finger fold. Ser86 is modified (phosphoserine). A B box-type zinc finger spans residues 90-132 (QKVDHCARHGEKLLLFCKEDGKVICWLCERSQEHRGHHTFLTE). Residues Cys95, His98, Cys117, and His123 each contribute to the Zn(2+) site. The stretch at 131 to 223 (TEEVAQKYQV…LTKSETEMVQ (93 aa)) forms a coiled coil. Positions 185–198 (FEQLRDILDWEESN) are required for interaction with GABARAP and for autophagy. Positions 281 to 493 (LKGMLEVFRE…VPMTLCSPSS (213 aa)) constitute a B30.2/SPRY domain.

This sequence belongs to the TRIM/RBCC family. As to quaternary structure, can form homodimers and homotrimers. In addition to lower-order dimerization, also exhibits a higher-order multimerization and both low- and high-order multimerizations are essential for its restriction activity. Interacts with BTBD1 and BTBD2. Interacts with PSMC4, PSMC5, PSMD7 and HSPA8/HSC70. Interacts (via B30.2/SPRY domain) with HSPA1A/B. Interacts with PSMC2, MAP3K7/TAK1, TAB2 and TAB3. Interacts with SQSTM1. Interacts with TRIM6 and TRIM34. Interacts with ULK1 (phosphorylated form), GABARAP, GABARAPL1, GABARAPL2, MAP1LC3A, MAP1LC3C and BECN1. In terms of processing, degraded in a proteasome-independent fashion in the absence of viral infection but in a proteasome-dependent fashion following exposure to restriction sensitive virus. Post-translationally, autoubiquitinated in a RING finger- and UBE2D2-dependent manner. Monoubiquitinated by TRIM21. Deubiquitinated by Yersinia YopJ. Ubiquitination may not lead to proteasomal degradation.

It localises to the cytoplasm. It is found in the nucleus. The enzyme catalyses S-ubiquitinyl-[E2 ubiquitin-conjugating enzyme]-L-cysteine + [acceptor protein]-L-lysine = [E2 ubiquitin-conjugating enzyme]-L-cysteine + N(6)-ubiquitinyl-[acceptor protein]-L-lysine.. The protein operates within protein modification; protein ubiquitination. Functionally, capsid-specific restriction factor that prevents infection from non-host-adapted retroviruses. Blocks viral replication early in the life cycle, after viral entry but before reverse transcription. In addition to acting as a capsid-specific restriction factor, also acts as a pattern recognition receptor that activates innate immune signaling in response to the retroviral capsid lattice. Binding to the viral capsid triggers its E3 ubiquitin ligase activity, and in concert with the heterodimeric ubiquitin conjugating enzyme complex UBE2V1-UBE2N (also known as UBC13-UEV1A complex) generates 'Lys-63'-linked polyubiquitin chains, which in turn are catalysts in the autophosphorylation of the MAP3K7/TAK1 complex (includes TAK1, TAB2, and TAB3). Activation of the MAP3K7/TAK1 complex by autophosphorylation results in the induction and expression of NF-kappa-B and MAPK-responsive inflammatory genes, thereby leading to an innate immune response in the infected cell. Plays a role in regulating autophagy through activation of autophagy regulator BECN1 by causing its dissociation from its inhibitors BCL2 and TAB2. The chain is Tripartite motif-containing protein 5 (TRIM5) from Pongo pygmaeus (Bornean orangutan).